Here is a 227-residue protein sequence, read N- to C-terminus: UPF0758 protein CPE2144 (227 aa).

The MPN domain maps to 105-227; it reads KISKPSDVAK…FISLKEKDIL (123 aa). Zn(2+) is bound by residues His176, His178, and Asp189. The short motif at 176 to 189 is the JAMM motif element; the sequence is HNHPSGDPTPSRDD.

Belongs to the UPF0758 family.

This Clostridium perfringens (strain 13 / Type A) protein is UPF0758 protein CPE2144.